The primary structure comprises 171 residues: MTLLSSNELRKLIQATPHLLENAVDIETQIQPNGLELTLKEIKTIEGVGAVDFDNSERKVPDAKPLEFEDDDWIHLPKGIYKVIFNEIVNIPMNLAAIAKPRSSLIRCGATLETAVWDAGYRGRSESMLVVYNSAGFRLKKNARIMQLLFYTLNSEVEEGYSGVYQNENTK.

This sequence belongs to the dCTP deaminase family. Archaeal dUTPase subfamily.

It carries out the reaction dUTP + H2O = dUMP + diphosphate + H(+). The protein operates within pyrimidine metabolism; dUMP biosynthesis; dUMP from dCTP (dUTP route): step 2/2. Functionally, this enzyme is involved in nucleotide metabolism: it produces dUMP, the immediate precursor of thymidine nucleotides and it decreases the intracellular concentration of dUTP so that uracil cannot be incorporated into DNA. The protein is Probable deoxyuridine 5'-triphosphate nucleotidohydrolase of Methanosarcina acetivorans (strain ATCC 35395 / DSM 2834 / JCM 12185 / C2A).